Reading from the N-terminus, the 572-residue chain is Arginine--tRNA ligase (572 aa).

The 'HIGH' region signature appears at 127–137 (ANPTGPLHVGH).

It belongs to the class-I aminoacyl-tRNA synthetase family. Monomer.

The protein localises to the cytoplasm. It catalyses the reaction tRNA(Arg) + L-arginine + ATP = L-arginyl-tRNA(Arg) + AMP + diphosphate. The sequence is that of Arginine--tRNA ligase from Vesicomyosocius okutanii subsp. Calyptogena okutanii (strain HA).